We begin with the raw amino-acid sequence, 199 residues long: MQYPEAIGRLIESFTKLPGIGPKTAVRLAFHVLDMEEDDVLTFAKSLVSAKRDIKYCTVCGHITDIDPCAICKDSHRDETVVCVVQDSRDVIAMEKMREYRGKYHVLHGAISPMEGIGPEDINVSSLLTRLQENESIQEVILATNPNIEGEATSMYLSRLLKPTGIRVTRLAHGLPVGGDLEYADEVTLSRAMEGRREL.

The segment at 57–72 (CTVCGHITDIDPCAIC) adopts a C4-type zinc-finger fold. The Toprim domain maps to 80–176 (TVVCVVQDSR…RVTRLAHGLP (97 aa)).

It belongs to the RecR family.

Functionally, may play a role in DNA repair. It seems to be involved in an RecBC-independent recombinational process of DNA repair. It may act with RecF and RecO. The polypeptide is Recombination protein RecR (Exiguobacterium sp. (strain ATCC BAA-1283 / AT1b)).